The sequence spans 222 residues: Protein GrpE (222 aa).

2 disordered regions span residues 1 to 21 (MNDG…ENGQ) and 200 to 222 (KGGP…PEGA).

It belongs to the GrpE family. Homodimer.

It localises to the cytoplasm. Its function is as follows. Participates actively in the response to hyperosmotic and heat shock by preventing the aggregation of stress-denatured proteins, in association with DnaK and GrpE. It is the nucleotide exchange factor for DnaK and may function as a thermosensor. Unfolded proteins bind initially to DnaJ; upon interaction with the DnaJ-bound protein, DnaK hydrolyzes its bound ATP, resulting in the formation of a stable complex. GrpE releases ADP from DnaK; ATP binding to DnaK triggers the release of the substrate protein, thus completing the reaction cycle. Several rounds of ATP-dependent interactions between DnaJ, DnaK and GrpE are required for fully efficient folding. The chain is Protein GrpE from Chelativorans sp. (strain BNC1).